A 457-amino-acid chain; its full sequence is Oxygen-independent coproporphyrinogen III oxidase (457 aa).

The 233-residue stretch at 47 to 279 (LKNPMPLSLY…EILESLISFL (233 aa)) folds into the Radical SAM core domain. An S-adenosyl-L-methionine-binding site is contributed by Tyr56. Residues Cys62 and Cys66 each contribute to the [4Fe-4S] cluster site. An S-adenosyl-L-methionine-binding site is contributed by Phe68. Cys69 lines the [4Fe-4S] cluster pocket. S-adenosyl-L-methionine contacts are provided by residues Gly113, 114–115 (GT), Glu147, Gln174, Arg186, Asp211, Ala245, and Ile331.

It belongs to the anaerobic coproporphyrinogen-III oxidase family. As to quaternary structure, monomer. [4Fe-4S] cluster is required as a cofactor.

The protein localises to the cytoplasm. The enzyme catalyses coproporphyrinogen III + 2 S-adenosyl-L-methionine = protoporphyrinogen IX + 2 5'-deoxyadenosine + 2 L-methionine + 2 CO2. It participates in porphyrin-containing compound metabolism; protoporphyrin-IX biosynthesis; protoporphyrinogen-IX from coproporphyrinogen-III (AdoMet route): step 1/1. In terms of biological role, involved in the heme biosynthesis. Catalyzes the anaerobic oxidative decarboxylation of propionate groups of rings A and B of coproporphyrinogen III to yield the vinyl groups in protoporphyrinogen IX. The chain is Oxygen-independent coproporphyrinogen III oxidase (hemN) from Helicobacter pylori (strain J99 / ATCC 700824) (Campylobacter pylori J99).